The chain runs to 290 residues: Phosphatidylglycerol--prolipoprotein diacylglyceryl transferase (290 aa).

The next 7 membrane-spanning stretches (helical) occupy residues 21–41 (VSLHWYGLMYLVGFVFAMWLA), 60–80 (LLYAGFLGVFIGGRVGYVLFY), 96–116 (WDGGMSFHGGLIGVICVMLWF), 124–144 (FFQVADFIAPLIPFGLGAGRL), 199–219 (SQLYEMILEGVVLFIILNVFI), 226–246 (GSVSGLFLIGYGTFRIIVECF), and 260–280 (ISMGQILSVPMILAGIIMMIW). A 1,2-diacyl-sn-glycero-3-phospho-(1'-sn-glycerol) is bound at residue arginine 143.

It belongs to the Lgt family.

The protein resides in the cell inner membrane. The enzyme catalyses L-cysteinyl-[prolipoprotein] + a 1,2-diacyl-sn-glycero-3-phospho-(1'-sn-glycerol) = an S-1,2-diacyl-sn-glyceryl-L-cysteinyl-[prolipoprotein] + sn-glycerol 1-phosphate + H(+). It participates in protein modification; lipoprotein biosynthesis (diacylglyceryl transfer). Catalyzes the transfer of the diacylglyceryl group from phosphatidylglycerol to the sulfhydryl group of the N-terminal cysteine of a prolipoprotein, the first step in the formation of mature lipoproteins. The protein is Phosphatidylglycerol--prolipoprotein diacylglyceryl transferase of Yersinia pseudotuberculosis serotype O:1b (strain IP 31758).